Reading from the N-terminus, the 391-residue chain is MFGTLASGEIETARLNRNLGITSNLGVSCGGFEDFAMRFEGENMVPYKGEEQEEEEDQVVVNETTPFQFQQPLFLQQQQKLVVGYALTSKKKKSFLQPKLELLARRKGIFFVAIDLNRPLSEQGPFDVVLHKLLGKEWEEVIEDYQQKHPEVTVLDPPGSIQRIYNRQSMLQGMADLKLSDCSGSLFVPKQMVVLKDSAASADAVVEAGLKFPLVAKPLWIDGTAKSHQLYLAYDRRSLAELDPPLVLQEFVNHGGVMFKVFVVGDVIKVMRRFSLPNVSNCEKAKVDGVFQFPRVSSAAASADNADLDPRVAELPPKPFLEALVKELRSLLGLRLFNIDMIREHGSKNVFYVIDINYFPGYGKLPDYEQVFVDFFQNLAQVKYKKRQHCK.

1D-myo-inositol 1,3,4-trisphosphate contacts are provided by Lys90 and Lys132. Residues Arg167 and Lys217 each contribute to the ATP site. The ATP-grasp domain occupies 178 to 384 (KLSDCSGSLF…FFQNLAQVKY (207 aa)). Positions 228 and 260 each coordinate 1D-myo-inositol 1,3,4-trisphosphate. Residues 249-260 (QEFVNHGGVMFK) and Ser275 contribute to the ATP site. Residues Asp340, Asp355, and Asn357 each contribute to the Mg(2+) site. Asn357 serves as a coordination point for 1D-myo-inositol 1,3,4-trisphosphate.

This sequence belongs to the ITPK1 family. In terms of assembly, monomer. Mg(2+) serves as cofactor. As to expression, expressed in seedling roots, cotyledons, rosette leaves, cauline leaves, stems, flowers, siliques and seeds.

It carries out the reaction 1D-myo-inositol 3,4,5,6-tetrakisphosphate + ATP = 1D-myo-inositol 1,3,4,5,6-pentakisphosphate + ADP + H(+). It catalyses the reaction 1D-myo-inositol 1,3,4-trisphosphate + ATP = 1D-myo-inositol 1,3,4,5-tetrakisphosphate + ADP + H(+). The enzyme catalyses 1D-myo-inositol 1,3,4-trisphosphate + ATP = 1D-myo-inositol 1,3,4,6-tetrakisphosphate + ADP + H(+). In terms of biological role, kinase that can phosphorylate various inositol polyphosphate such as Ins(3,4,5,6)P4 or Ins(1,3,4)P3. Phosphorylates Ins(3,4,5,6)P4 to form InsP5. This reaction is thought to have regulatory importance, since Ins(3,4,5,6)P4 is an inhibitor of plasma membrane Ca(2+)-activated Cl(-) channels, while Ins(1,3,4,5,6)P5 is not. Also phosphorylates Ins(1,3,4)P3 or a racemic mixture of Ins(1,4,6)P3 and Ins(3,4,6)P3 to form InsP4. Ins(1,3,4,6)P4 is an essential molecule in the hexakisphosphate (InsP6) pathway. Plays a role in seed coat development and lipid polyester barrier formation. This Arabidopsis thaliana (Mouse-ear cress) protein is Inositol-tetrakisphosphate 1-kinase 2 (ITPK2).